We begin with the raw amino-acid sequence, 96 residues long: MTIIASIITLSNPKQSTTGSVSTVSAAFKFGSNSVSCGGSSGSGSGLLGGNKGLLGLLGGLGGSPNSKVGVNIGGGMGPQTGSMMGGGQPNYCGCN.

This sequence belongs to the hssA/B family.

The protein is HssA/B-like protein 25 (hssl25) of Dictyostelium discoideum (Social amoeba).